The following is a 119-amino-acid chain: Aspartate 1-decarboxylase (119 aa).

The Schiff-base intermediate with substrate; via pyruvic acid role is filled by Ser25. Ser25 bears the Pyruvic acid (Ser) mark. Residue Thr57 participates in substrate binding. Catalysis depends on Tyr58, which acts as the Proton donor. 73–75 (GAA) lines the substrate pocket.

This sequence belongs to the PanD family. In terms of assembly, heterooctamer of four alpha and four beta subunits. Pyruvate is required as a cofactor. Is synthesized initially as an inactive proenzyme, which is activated by self-cleavage at a specific serine bond to produce a beta-subunit with a hydroxyl group at its C-terminus and an alpha-subunit with a pyruvoyl group at its N-terminus.

The protein localises to the cytoplasm. It carries out the reaction L-aspartate + H(+) = beta-alanine + CO2. It functions in the pathway cofactor biosynthesis; (R)-pantothenate biosynthesis; beta-alanine from L-aspartate: step 1/1. Functionally, catalyzes the pyruvoyl-dependent decarboxylation of aspartate to produce beta-alanine. This Herminiimonas arsenicoxydans protein is Aspartate 1-decarboxylase.